The chain runs to 221 residues: Deoxyribose-phosphate aldolase (221 aa).

The Proton donor/acceptor role is filled by Asp89. Lys151 serves as the catalytic Schiff-base intermediate with acetaldehyde. Lys180 serves as the catalytic Proton donor/acceptor.

The protein belongs to the DeoC/FbaB aldolase family. DeoC type 1 subfamily.

The protein localises to the cytoplasm. It carries out the reaction 2-deoxy-D-ribose 5-phosphate = D-glyceraldehyde 3-phosphate + acetaldehyde. The protein operates within carbohydrate degradation; 2-deoxy-D-ribose 1-phosphate degradation; D-glyceraldehyde 3-phosphate and acetaldehyde from 2-deoxy-alpha-D-ribose 1-phosphate: step 2/2. Functionally, catalyzes a reversible aldol reaction between acetaldehyde and D-glyceraldehyde 3-phosphate to generate 2-deoxy-D-ribose 5-phosphate. The protein is Deoxyribose-phosphate aldolase of Brevibacillus brevis (strain 47 / JCM 6285 / NBRC 100599).